Reading from the N-terminus, the 166-residue chain is uncharacterized protein (166 aa).

Residues 34 to 54 (FWGKVLVLTFGIICVVFVIFM) form a helical membrane-spanning segment. 2 disordered regions span residues 73–93 (QRTQHSIHRRERSSSGASQQF) and 123–166 (TSTP…NDEV).

It localises to the vacuole membrane. This is an uncharacterized protein from Schizosaccharomyces pombe (strain 972 / ATCC 24843) (Fission yeast).